The primary structure comprises 88 residues: Putative membrane protein insertion efficiency factor (88 aa).

The protein belongs to the UPF0161 family.

It is found in the cell membrane. Could be involved in insertion of integral membrane proteins into the membrane. This is Putative membrane protein insertion efficiency factor (yrcB) from Lactococcus lactis subsp. lactis (strain IL1403) (Streptococcus lactis).